Reading from the N-terminus, the 321-residue chain is Ras association domain-containing protein 4 (321 aa).

A disordered region spans residues 79-159; the sequence is HLPSTSWMPR…RPKCRAPGEA (81 aa). Residues 98–110 are compositionally biased toward polar residues; that stretch reads SPQNGNITAQGPS. Residue S141 is modified to Phosphoserine. Residues 174 to 262 form the Ras-associating domain; that stretch reads YNHKTSVFTP…ARIFLMEADL (89 aa). Residues 270–317 form the SARAH domain; the sequence is VAQYIKFEMPVLDSFVEKLKEEEEREIIKLTMKFQALRLTMLQRLEQL.

As to quaternary structure, interacts directly with activated KRAS in a GTP-dependent manner. In terms of tissue distribution, widely expressed. Frequently down-regulated in tumor cell lines.

Potential tumor suppressor. May act as a KRAS effector protein. May promote apoptosis and cell cycle arrest. The protein is Ras association domain-containing protein 4 (RASSF4) of Homo sapiens (Human).